We begin with the raw amino-acid sequence, 246 residues long: Alpha-tubulin N-acetyltransferase (246 aa).

Residues 21–202 enclose the N-acetyltransferase domain; the sequence is LTLVPDGVSR…NNFVVFHSFF (182 aa). Acetyl-CoA contacts are provided by residues 135–148 and 172–181; these read FYVDESCQRQGYGK and SNKLLGFLRK.

Belongs to the acetyltransferase ATAT1 family.

The enzyme catalyses L-lysyl-[alpha-tubulin] + acetyl-CoA = N(6)-acetyl-L-lysyl-[alpha-tubulin] + CoA + H(+). Its function is as follows. Specifically acetylates 'Lys-40' in alpha-tubulin on the lumenal side of microtubules. Promotes microtubule destabilization and accelerates microtubule dynamics; this activity may be independent of acetylation activity. Acetylates alpha-tubulin with a slow enzymatic rate, due to a catalytic site that is not optimized for acetyl transfer. Enters the microtubule through each end and diffuses quickly throughout the lumen of microtubules. Acetylates only long/old microtubules because of its slow acetylation rate since it does not have time to act on dynamically unstable microtubules before the enzyme is released. The sequence is that of Alpha-tubulin N-acetyltransferase from Leishmania infantum.